The sequence spans 279 residues: 3-methyl-2-oxobutanoate hydroxymethyltransferase (279 aa).

Residues D43 and D82 each contribute to the Mg(2+) site. Residues 43–44 (DS), D82, and K112 contribute to the 3-methyl-2-oxobutanoate site. A Mg(2+)-binding site is contributed by E114. E181 serves as the catalytic Proton acceptor.

Belongs to the PanB family. As to quaternary structure, homodecamer; pentamer of dimers. Mg(2+) is required as a cofactor.

It localises to the cytoplasm. The enzyme catalyses 3-methyl-2-oxobutanoate + (6R)-5,10-methylene-5,6,7,8-tetrahydrofolate + H2O = 2-dehydropantoate + (6S)-5,6,7,8-tetrahydrofolate. It functions in the pathway cofactor biosynthesis; (R)-pantothenate biosynthesis; (R)-pantoate from 3-methyl-2-oxobutanoate: step 1/2. In terms of biological role, catalyzes the reversible reaction in which hydroxymethyl group from 5,10-methylenetetrahydrofolate is transferred onto alpha-ketoisovalerate to form ketopantoate. The chain is 3-methyl-2-oxobutanoate hydroxymethyltransferase from Geobacillus sp. (strain WCH70).